The chain runs to 404 residues: Nicotinate phosphoribosyltransferase (404 aa).

A Phosphohistidine; by autocatalysis modification is found at His225.

It belongs to the NAPRTase family. Post-translationally, transiently phosphorylated on a His residue during the reaction cycle. Phosphorylation strongly increases the affinity for substrates and increases the rate of nicotinate D-ribonucleotide production. Dephosphorylation regenerates the low-affinity form of the enzyme, leading to product release.

The enzyme catalyses nicotinate + 5-phospho-alpha-D-ribose 1-diphosphate + ATP + H2O = nicotinate beta-D-ribonucleotide + ADP + phosphate + diphosphate. It participates in cofactor biosynthesis; NAD(+) biosynthesis; nicotinate D-ribonucleotide from nicotinate: step 1/1. In terms of biological role, catalyzes the synthesis of beta-nicotinate D-ribonucleotide from nicotinate and 5-phospho-D-ribose 1-phosphate at the expense of ATP. In Methanosarcina acetivorans (strain ATCC 35395 / DSM 2834 / JCM 12185 / C2A), this protein is Nicotinate phosphoribosyltransferase.